The primary structure comprises 495 residues: Acetyl-coenzyme A carboxylase carboxyl transferase subunit beta, chloroplastic (495 aa).

Positions 187 to 208 (ESRNSSENEGSSRRTRTKGSDL) are disordered. In terms of domain architecture, CoA carboxyltransferase N-terminal spans 226-495 (LWVQCENCYG…PLNQKSSKIK (270 aa)). Cysteine 230, cysteine 233, cysteine 249, and cysteine 252 together coordinate Zn(2+). The C4-type zinc-finger motif lies at 230–252 (CENCYGLNYKKFLKSKMNICEQC).

It belongs to the AccD/PCCB family. As to quaternary structure, acetyl-CoA carboxylase is a heterohexamer composed of biotin carboxyl carrier protein, biotin carboxylase and 2 subunits each of ACCase subunit alpha and ACCase plastid-coded subunit beta (accD). Requires Zn(2+) as cofactor. As to expression, RNA expressed in leaf, root and stem; the least expression occurs in stems.

It is found in the plastid. The protein localises to the chloroplast stroma. The catalysed reaction is N(6)-carboxybiotinyl-L-lysyl-[protein] + acetyl-CoA = N(6)-biotinyl-L-lysyl-[protein] + malonyl-CoA. Its pathway is lipid metabolism; malonyl-CoA biosynthesis; malonyl-CoA from acetyl-CoA: step 1/1. In terms of biological role, component of the acetyl coenzyme A carboxylase (ACC) complex. Biotin carboxylase (BC) catalyzes the carboxylation of biotin on its carrier protein (BCCP) and then the CO(2) group is transferred by the transcarboxylase to acetyl-CoA to form malonyl-CoA. This Nicotiana tabacum (Common tobacco) protein is Acetyl-coenzyme A carboxylase carboxyl transferase subunit beta, chloroplastic.